A 500-amino-acid polypeptide reads, in one-letter code: Replication factor C large subunit (500 aa).

44-51 (GSPGVGKT) contacts ATP. The disordered stretch occupies residues 443–500 (HAADDLGASDGETTNASGTASSSGDDGDADGTTDGDGSDANDGNDDDDDGQAGLSDFV). Over residues 455-466 (TTNASGTASSSG) the composition is skewed to low complexity. Over residues 467 to 492 (DDGDADGTTDGDGSDANDGNDDDDDG) the composition is skewed to acidic residues.

Belongs to the activator 1 small subunits family. RfcL subfamily. As to quaternary structure, heteromultimer composed of small subunits (RfcS) and large subunits (RfcL).

Its function is as follows. Part of the RFC clamp loader complex which loads the PCNA sliding clamp onto DNA. This Halorubrum lacusprofundi (strain ATCC 49239 / DSM 5036 / JCM 8891 / ACAM 34) protein is Replication factor C large subunit.